Here is a 155-residue protein sequence, read N- to C-terminus: Nodulin-related protein 2 (155 aa).

At M1 the chain carries N-acetylmethionine. Disordered regions lie at residues 1 to 37 and 85 to 155; these read MNFISDQVKKLSSSTPEEPDHNKPVEGTETATRPATN and DEKS…GFLK. The segment covering 95-106 has biased composition (basic and acidic residues); sequence DKAEKYLNDYES. Positions 120 to 130 are enriched in low complexity; it reads SQAEPASQPEP.

Interacts with DEK3.

In terms of biological role, may be a negative regulator of the ABA signaling/synthesis pathway. This chain is Nodulin-related protein 2, found in Arabidopsis thaliana (Mouse-ear cress).